A 313-amino-acid chain; its full sequence is Methionyl-tRNA formyltransferase (313 aa).

109-112 (SLLP) contacts (6S)-5,6,7,8-tetrahydrofolate.

This sequence belongs to the Fmt family.

It catalyses the reaction L-methionyl-tRNA(fMet) + (6R)-10-formyltetrahydrofolate = N-formyl-L-methionyl-tRNA(fMet) + (6S)-5,6,7,8-tetrahydrofolate + H(+). In terms of biological role, attaches a formyl group to the free amino group of methionyl-tRNA(fMet). The formyl group appears to play a dual role in the initiator identity of N-formylmethionyl-tRNA by promoting its recognition by IF2 and preventing the misappropriation of this tRNA by the elongation apparatus. In Thermotoga maritima (strain ATCC 43589 / DSM 3109 / JCM 10099 / NBRC 100826 / MSB8), this protein is Methionyl-tRNA formyltransferase.